The primary structure comprises 176 residues: ATP-dependent protease subunit HslV (176 aa).

Thr-5 is a catalytic residue. Na(+) is bound by residues Ala-161, Cys-164, and Thr-167.

This sequence belongs to the peptidase T1B family. HslV subfamily. A double ring-shaped homohexamer of HslV is capped on each side by a ring-shaped HslU homohexamer. The assembly of the HslU/HslV complex is dependent on binding of ATP.

Its subcellular location is the cytoplasm. It catalyses the reaction ATP-dependent cleavage of peptide bonds with broad specificity.. Allosterically activated by HslU binding. In terms of biological role, protease subunit of a proteasome-like degradation complex believed to be a general protein degrading machinery. The sequence is that of ATP-dependent protease subunit HslV from Caldicellulosiruptor saccharolyticus (strain ATCC 43494 / DSM 8903 / Tp8T 6331).